We begin with the raw amino-acid sequence, 1221 residues long: DNA-directed RNA polymerase subunit beta (1221 aa).

The tract at residues 1176-1221 (EKKKLAEEEAEIAAEAEAEGSAEEDAAEADADANEAETADDDKASK) is disordered. Acidic residues predominate over residues 1183–1215 (EEAEIAAEAEAEGSAEEDAAEADADANEAETAD).

The protein belongs to the RNA polymerase beta chain family. As to quaternary structure, the RNAP catalytic core consists of 2 alpha, 1 beta, 1 beta' and 1 omega subunit. When a sigma factor is associated with the core the holoenzyme is formed, which can initiate transcription.

It catalyses the reaction RNA(n) + a ribonucleoside 5'-triphosphate = RNA(n+1) + diphosphate. In terms of biological role, DNA-dependent RNA polymerase catalyzes the transcription of DNA into RNA using the four ribonucleoside triphosphates as substrates. The chain is DNA-directed RNA polymerase subunit beta from Lactobacillus delbrueckii subsp. bulgaricus (strain ATCC BAA-365 / Lb-18).